Reading from the N-terminus, the 357-residue chain is Arginine kinase Met e 2 (357 aa).

Residues Lys-9–Val-91 form the Phosphagen kinase N-terminal domain. Gly-64–Tyr-68 is a binding site for L-arginine. Residues Phe-119–Met-356 form the Phosphagen kinase C-terminal domain. ATP-binding positions include Ser-122 to Arg-126 and His-185. Position 225 (Glu-225) interacts with L-arginine. Residue Arg-229 participates in ATP binding. Cys-271 contributes to the L-arginine binding site. ATP is bound by residues Arg-280–His-284 and Arg-309–Glu-314. L-arginine is bound at residue Glu-314.

The protein belongs to the ATP:guanido phosphotransferase family.

It catalyses the reaction L-arginine + ATP = N(omega)-phospho-L-arginine + ADP + H(+). Its function is as follows. Catalyzes the reversible transfer of high energy ATP gamma-phosphate group to L-arginine. The sequence is that of Arginine kinase Met e 2 from Metapenaeus ensis (Greasyback shrimp).